The chain runs to 281 residues: 2-C-methyl-D-erythritol 4-phosphate cytidylyltransferase (281 aa).

It belongs to the IspD/TarI cytidylyltransferase family. IspD subfamily.

It carries out the reaction 2-C-methyl-D-erythritol 4-phosphate + CTP + H(+) = 4-CDP-2-C-methyl-D-erythritol + diphosphate. The protein operates within isoprenoid biosynthesis; isopentenyl diphosphate biosynthesis via DXP pathway; isopentenyl diphosphate from 1-deoxy-D-xylulose 5-phosphate: step 2/6. Its function is as follows. Catalyzes the formation of 4-diphosphocytidyl-2-C-methyl-D-erythritol from CTP and 2-C-methyl-D-erythritol 4-phosphate (MEP). The polypeptide is 2-C-methyl-D-erythritol 4-phosphate cytidylyltransferase (Psychrobacter arcticus (strain DSM 17307 / VKM B-2377 / 273-4)).